We begin with the raw amino-acid sequence, 376 residues long: WD repeat-containing protein 86 (376 aa).

WD repeat units follow at residues 13–52 (DHRG…CCAL), 55–94 (GHES…QVYR), 95–132 (GHTS…MSRE), 135–188 (GHRN…CHQT), 191–232 (GHTG…RVFR), 234–272 (HRGS…RTFT), 274–310 (HRRN…LRRV), and 313–350 (GHTF…GAPR).

In Homo sapiens (Human), this protein is WD repeat-containing protein 86 (WDR86).